Here is a 78-residue protein sequence, read N- to C-terminus: DNA-directed RNA polymerase subunit omega (78 aa).

The protein belongs to the RNA polymerase subunit omega family. In cyanobacteria the RNAP catalytic core is composed of 2 alpha, 1 beta, 1 beta', 1 gamma and 1 omega subunit. When a sigma factor is associated with the core the holoenzyme is formed, which can initiate transcription.

It catalyses the reaction RNA(n) + a ribonucleoside 5'-triphosphate = RNA(n+1) + diphosphate. In terms of biological role, promotes RNA polymerase assembly. Latches the N- and C-terminal regions of the beta' subunit thereby facilitating its interaction with the beta and alpha subunits. In Prochlorococcus marinus (strain MIT 9301), this protein is DNA-directed RNA polymerase subunit omega.